A 517-amino-acid polypeptide reads, in one-letter code: Crotonobetaine/carnitine--CoA ligase (517 aa).

This sequence belongs to the ATP-dependent AMP-binding enzyme family.

It catalyses the reaction 4-(trimethylamino)butanoate + ATP + CoA = 4-(trimethylamino)butanoyl-CoA + AMP + diphosphate. It carries out the reaction crotonobetaine + ATP + CoA = crotonobetainyl-CoA + AMP + diphosphate. The enzyme catalyses (R)-carnitine + ATP + CoA = (R)-carnitinyl-CoA + AMP + diphosphate. The protein operates within amine and polyamine metabolism; carnitine metabolism. Functionally, catalyzes the transfer of CoA to carnitine, generating the initial carnitinyl-CoA needed for the CaiB reaction cycle. Also has activity toward crotonobetaine and gamma-butyrobetaine. In Escherichia coli O157:H7, this protein is Crotonobetaine/carnitine--CoA ligase.